The primary structure comprises 334 residues: Glyceraldehyde-3-phosphate dehydrogenase (334 aa).

NAD(+)-binding positions include 12 to 13 (RI), Asp34, and Arg79. Residues 150 to 152 (SCT), Thr181, 210 to 211 (TG), and Arg233 each bind D-glyceraldehyde 3-phosphate. The Nucleophile role is filled by Cys151. Asn315 is an NAD(+) binding site.

Belongs to the glyceraldehyde-3-phosphate dehydrogenase family. In terms of assembly, homotetramer.

It localises to the cytoplasm. The catalysed reaction is D-glyceraldehyde 3-phosphate + phosphate + NAD(+) = (2R)-3-phospho-glyceroyl phosphate + NADH + H(+). Its pathway is carbohydrate degradation; glycolysis; pyruvate from D-glyceraldehyde 3-phosphate: step 1/5. This Wickerhamomyces ciferrii (strain ATCC 14091 / BCRC 22168 / CBS 111 / JCM 3599 / NBRC 0793 / NRRL Y-1031 F-60-10) (Yeast) protein is Glyceraldehyde-3-phosphate dehydrogenase (GPD).